A 216-amino-acid chain; its full sequence is Peptide methionine sulfoxide reductase MsrA (216 aa).

Cysteine 54 is a catalytic residue.

This sequence belongs to the MsrA Met sulfoxide reductase family.

The enzyme catalyses L-methionyl-[protein] + [thioredoxin]-disulfide + H2O = L-methionyl-(S)-S-oxide-[protein] + [thioredoxin]-dithiol. It carries out the reaction [thioredoxin]-disulfide + L-methionine + H2O = L-methionine (S)-S-oxide + [thioredoxin]-dithiol. Functionally, has an important function as a repair enzyme for proteins that have been inactivated by oxidation. Catalyzes the reversible oxidation-reduction of methionine sulfoxide in proteins to methionine. This chain is Peptide methionine sulfoxide reductase MsrA, found in Xanthomonas campestris pv. phaseoli.